The following is a 696-amino-acid chain: DNA-directed RNA polymerase subunit beta N-terminal section (696 aa).

Belongs to the RNA polymerase beta chain family. As to quaternary structure, in plastids the minimal PEP RNA polymerase catalytic core is composed of four subunits: alpha, beta, beta', and beta''. When a (nuclear-encoded) sigma factor is associated with the core the holoenzyme is formed, which can initiate transcription.

Its subcellular location is the plastid. The protein localises to the chloroplast. It carries out the reaction RNA(n) + a ribonucleoside 5'-triphosphate = RNA(n+1) + diphosphate. Its function is as follows. DNA-dependent RNA polymerase catalyzes the transcription of DNA into RNA using the four ribonucleoside triphosphates as substrates. This chain is DNA-directed RNA polymerase subunit beta N-terminal section (rpoB1), found in Stigeoclonium helveticum (Green alga).